Here is a 153-residue protein sequence, read N- to C-terminus: 3-hydroxyacyl-[acyl-carrier-protein] dehydratase FabZ (153 aa).

The active site involves histidine 47.

This sequence belongs to the thioester dehydratase family. FabZ subfamily.

Its subcellular location is the cytoplasm. The enzyme catalyses a (3R)-hydroxyacyl-[ACP] = a (2E)-enoyl-[ACP] + H2O. Functionally, involved in unsaturated fatty acids biosynthesis. Catalyzes the dehydration of short chain beta-hydroxyacyl-ACPs and long chain saturated and unsaturated beta-hydroxyacyl-ACPs. This is 3-hydroxyacyl-[acyl-carrier-protein] dehydratase FabZ from Dichelobacter nodosus (strain VCS1703A).